Here is a 478-residue protein sequence, read N- to C-terminus: MTLSFITRWRDELPETYTALSPTPLNNARLIWHNTELANTLSIPSSLFKNGAGVWGGENLLPGMSPLAQVYSGHQFGVWAGQLGDGRGILLGEQLLADGTTMDWHLKGAGLTPYSRMGDGRAVLRSTIRESLASEAMHYLGIPTTRALSIVTSDSPVYRETVESGAMLMRVAPSHLRFGHFEHFYYRREPEKVRQLADFAIRHYWSHLDDEEDKYRLWFTDVVARTASLIAQWQTVGFAHGVMNTDNMSLLGLTLDYGPFGFLDDYEPGFICNHSDHQGRYSFDNQPAVALWNLQRLAQTLSPFVAVDALNEALDSYQQVLLTHYGQRMRQKLGFMTEQKEDNALLNELFSLMARERSDYTRTFRMLSLTEQHSAASPLRDEFIDRAAFDDWFARYRGRLQQDEITDSERQQLMQSVNPALVLRNWLAQRAIEAAEKDDMTELHRLHEALRNPFSDRDDDYVSRPPDWGKRLEVSCSS.

Residues G84, G86, R87, K107, D119, G120, R170, and R177 each coordinate ATP. D246 acts as the Proton acceptor in catalysis. Mg(2+) is bound by residues N247 and D256. Residue D256 participates in ATP binding.

Belongs to the SELO family. Mg(2+) serves as cofactor. Requires Mn(2+) as cofactor.

The catalysed reaction is L-seryl-[protein] + ATP = 3-O-(5'-adenylyl)-L-seryl-[protein] + diphosphate. It carries out the reaction L-threonyl-[protein] + ATP = 3-O-(5'-adenylyl)-L-threonyl-[protein] + diphosphate. It catalyses the reaction L-tyrosyl-[protein] + ATP = O-(5'-adenylyl)-L-tyrosyl-[protein] + diphosphate. The enzyme catalyses L-histidyl-[protein] + UTP = N(tele)-(5'-uridylyl)-L-histidyl-[protein] + diphosphate. The catalysed reaction is L-seryl-[protein] + UTP = O-(5'-uridylyl)-L-seryl-[protein] + diphosphate. It carries out the reaction L-tyrosyl-[protein] + UTP = O-(5'-uridylyl)-L-tyrosyl-[protein] + diphosphate. Its function is as follows. Nucleotidyltransferase involved in the post-translational modification of proteins. It can catalyze the addition of adenosine monophosphate (AMP) or uridine monophosphate (UMP) to a protein, resulting in modifications known as AMPylation and UMPylation. This is Protein nucleotidyltransferase YdiU from Escherichia coli O1:K1 / APEC.